The sequence spans 265 residues: GTP cyclohydrolase FolE2 (265 aa).

This sequence belongs to the GTP cyclohydrolase IV family.

The catalysed reaction is GTP + H2O = 7,8-dihydroneopterin 3'-triphosphate + formate + H(+). It functions in the pathway cofactor biosynthesis; 7,8-dihydroneopterin triphosphate biosynthesis; 7,8-dihydroneopterin triphosphate from GTP: step 1/1. In terms of biological role, converts GTP to 7,8-dihydroneopterin triphosphate. This is GTP cyclohydrolase FolE2 from Magnetococcus marinus (strain ATCC BAA-1437 / JCM 17883 / MC-1).